Here is a 461-residue protein sequence, read N- to C-terminus: V-type ATP synthase beta chain (461 aa).

Belongs to the ATPase alpha/beta chains family.

Its function is as follows. Produces ATP from ADP in the presence of a proton gradient across the membrane. The V-type beta chain is a regulatory subunit. This chain is V-type ATP synthase beta chain, found in Clostridium botulinum (strain Langeland / NCTC 10281 / Type F).